The chain runs to 129 residues: Large ribosomal subunit protein bL20 (129 aa).

It belongs to the bacterial ribosomal protein bL20 family.

Functionally, binds directly to 23S ribosomal RNA and is necessary for the in vitro assembly process of the 50S ribosomal subunit. It is not involved in the protein synthesizing functions of that subunit. This Mycobacterium leprae (strain Br4923) protein is Large ribosomal subunit protein bL20.